We begin with the raw amino-acid sequence, 1414 residues long: Alpha-(1-&gt;3)-arabinofuranosyltransferase (1414 aa).

The next 9 membrane-spanning stretches (helical) occupy residues 57 to 77 (YLFP…PGWV), 81 to 101 (LWWA…AEAL), 128 to 148 (AISS…PVIL), 167 to 187 (VALM…AAVI), 203 to 223 (AWWL…LLML), 273 to 293 (STTA…GLAL), 302 to 322 (LITM…GGLG), 352 to 372 (LPLA…GSAP), and 389 to 409 (VAVA…AWTA). The F5/8 type C domain maps to 687–845 (YPSDGADLVY…QYDASGFAHP (159 aa)). The next 4 helical transmembrane spans lie at 1253-1273 (VGLI…LIPV), 1297-1317 (ALVA…GAAM), 1333-1353 (VWDN…GSVL), and 1364-1384 (YVGH…FLAA). Positions 1393–1414 (PEPSEDGRSAKPEHTGASAHAG) are disordered. The segment covering 1394–1406 (EPSEDGRSAKPEH) has biased composition (basic and acidic residues).

It localises to the membrane. The catalysed reaction is Adds an alpha-D-arabinofuranosyl group from trans,octacis-decaprenylphospho-beta-D-arabinofuranose at the 3-O-position of an alpha-(1-&gt;5)-arabinofuranan chain attached to a beta-(1-&gt;5)-galactofuranan chain.. Its pathway is cell wall biogenesis; cell wall polysaccharide biosynthesis. Involved in the biosynthesis of the arabinogalactan (AG) region of the mycolylarabinogalactan-peptidoglycan (mAGP) complex, an essential component of the mycobacterial cell wall. Catalyzes the addition of an arabinofuranosyl (Araf) residue from the sugar donor decaprenyl-phospho-arabinose (DPA) on the C-3 of an alpha-(1-&gt;5)-linked Araf from the arabinan backbone of AG. The protein is Alpha-(1-&gt;3)-arabinofuranosyltransferase (aftD) of Mycolicibacterium smegmatis (strain ATCC 700084 / mc(2)155) (Mycobacterium smegmatis).